A 98-amino-acid polypeptide reads, in one-letter code: UPF0235 protein azo3464 (98 aa).

This sequence belongs to the UPF0235 family.

This is UPF0235 protein azo3464 from Azoarcus sp. (strain BH72).